The primary structure comprises 326 residues: Peroxidase 1 (326 aa).

Positions 1–22 (MASSRVILALLLAAAAVMASSA) are cleaved as a signal peptide. Gln-23 carries the post-translational modification Pyrrolidone carboxylic acid. Disulfide bonds link Cys-33–Cys-112, Cys-66–Cys-71, Cys-118–Cys-322, and Cys-196–Cys-231. Catalysis depends on His-64, which acts as the Proton acceptor. Ca(2+)-binding residues include Asp-65, Val-68, Gly-70, Asp-72, and Ser-74. 2 N-linked (GlcNAc...) asparagine glycosylation sites follow: Asn-82 and Asn-153. Position 159 (Pro-159) interacts with substrate. A glycan (N-linked (GlcNAc...) asparagine) is linked at Asn-164. His-189 serves as a coordination point for heme b. Position 190 (Thr-190) interacts with Ca(2+). Asn-205 and Asn-237 each carry an N-linked (GlcNAc...) asparagine glycan. Residues Asp-244, Ser-247, and Asp-252 each coordinate Ca(2+).

It belongs to the peroxidase family. Classical plant (class III) peroxidase subfamily. Ca(2+) serves as cofactor. The cofactor is heme b.

Its subcellular location is the secreted. It catalyses the reaction 2 a phenolic donor + H2O2 = 2 a phenolic radical donor + 2 H2O. Removal of H(2)O(2), oxidation of toxic reductants, biosynthesis and degradation of lignin, suberization, auxin catabolism, response to environmental stresses such as wounding, pathogen attack and oxidative stress. These functions might be dependent on each isozyme/isoform in each plant tissue. This chain is Peroxidase 1 (PRX74), found in Oryza sativa subsp. japonica (Rice).